A 199-amino-acid polypeptide reads, in one-letter code: Thymidine kinase (199 aa).

Residues 15–22 (GSMFSGKS) and 88–91 (DEVQ) contribute to the ATP site. Glutamate 89 (proton acceptor) is an active-site residue. 4 residues coordinate Zn(2+): cysteine 145, cysteine 148, cysteine 183, and histidine 186.

It belongs to the thymidine kinase family. Homotetramer.

Its subcellular location is the cytoplasm. The catalysed reaction is thymidine + ATP = dTMP + ADP + H(+). This is Thymidine kinase from Staphylococcus aureus (strain USA300).